The primary structure comprises 542 residues: Membrane protein insertase YidC (542 aa).

Residues 5 to 25 form a helical membrane-spanning segment; it reads TLLAVILSITVFYVFSLLFAP. The tract at residues 33–64 is disordered; that stretch reads ESTGQAVSAPVSAGQPVAGGVQPSASAPSLPA. The segment covering 54–64 has biased composition (low complexity); that stretch reads QPSASAPSLPA. 5 helical membrane passes run 323 to 343, 345 to 365, 419 to 439, 463 to 483, and 500 to 520; these read LDLG…KYFY, YVGN…ALFF, LPML…MFSI, MLGL…TMFI, and MLAL…GLVL.

This sequence belongs to the OXA1/ALB3/YidC family. Type 1 subfamily. Interacts with the Sec translocase complex via SecD. Specifically interacts with transmembrane segments of nascent integral membrane proteins during membrane integration.

The protein localises to the cell inner membrane. In terms of biological role, required for the insertion and/or proper folding and/or complex formation of integral membrane proteins into the membrane. Involved in integration of membrane proteins that insert both dependently and independently of the Sec translocase complex, as well as at least some lipoproteins. Aids folding of multispanning membrane proteins. This Pelobacter propionicus (strain DSM 2379 / NBRC 103807 / OttBd1) protein is Membrane protein insertase YidC.